A 388-amino-acid polypeptide reads, in one-letter code: Angiopoietin-related protein 5 (388 aa).

Residues 1–25 (MMSPSQASLLFLNVCIFICGEAVQG) form the signal peptide. Asn-53 is a glycosylation site (N-linked (GlcNAc...) asparagine). Residues 98–123 (LRNMMDEQQASLDYLSNQVNELMNRV) adopt a coiled-coil conformation. The Fibrinogen C-terminal domain maps to 141–383 (RPVQSHGLDC…SVSMKIRRMY (243 aa)). A glycan (N-linked (GlcNAc...) asparagine) is linked at Asn-238. 2 disulfides stabilise this stretch: Cys-310/Cys-314 and Cys-324/Cys-338. Residue Asn-329 is glycosylated (N-linked (GlcNAc...) asparagine).

In terms of tissue distribution, mainly expressed in adult heart.

It is found in the secreted. The sequence is that of Angiopoietin-related protein 5 (ANGPTL5) from Homo sapiens (Human).